The sequence spans 184 residues: UPF0149 protein PSEEN5316 (184 aa).

It belongs to the UPF0149 family.

This Pseudomonas entomophila (strain L48) protein is UPF0149 protein PSEEN5316.